The chain runs to 85 residues: UPF0386 protein Plav_1374 (85 aa).

Belongs to the UPF0386 family.

The protein is UPF0386 protein Plav_1374 of Parvibaculum lavamentivorans (strain DS-1 / DSM 13023 / NCIMB 13966).